The chain runs to 294 residues: 33 kDa chaperonin (294 aa).

Disulfide bonds link Cys-238–Cys-240 and Cys-271–Cys-274.

It belongs to the HSP33 family. Post-translationally, under oxidizing conditions two disulfide bonds are formed involving the reactive cysteines. Under reducing conditions zinc is bound to the reactive cysteines and the protein is inactive.

The protein localises to the cytoplasm. Its function is as follows. Redox regulated molecular chaperone. Protects both thermally unfolding and oxidatively damaged proteins from irreversible aggregation. Plays an important role in the bacterial defense system toward oxidative stress. This is 33 kDa chaperonin from Clostridium tetani (strain Massachusetts / E88).